The following is a 637-amino-acid chain: DNA primase (637 aa).

The CHC2-type zinc finger occupies 39–63 (CPFHGEKTPSFNVNAEKGFYHCFGC). Positions 257-338 (HEVYLMEGFM…QIVKVPEGLD (82 aa)) constitute a Toprim domain. Residues Glu-263, Asp-307, and Asp-309 each contribute to the Mg(2+) site.

This sequence belongs to the DnaG primase family. As to quaternary structure, monomer. Interacts with DnaB. It depends on Zn(2+) as a cofactor. Mg(2+) is required as a cofactor.

It catalyses the reaction ssDNA + n NTP = ssDNA/pppN(pN)n-1 hybrid + (n-1) diphosphate.. In terms of biological role, RNA polymerase that catalyzes the synthesis of short RNA molecules used as primers for DNA polymerase during DNA replication. The chain is DNA primase from Lactococcus lactis subsp. lactis (strain IL1403) (Streptococcus lactis).